The primary structure comprises 732 residues: E3 ubiquitin-protein ligase RNF19B (732 aa).

Residues 1-109 (MGSEKDSESP…PEEDEAAEGG (109 aa)) are disordered. A required for ubiquitin ligase activity and for protection against staurosporin-induced cell death region spans residues 1-315 (MGSEKDSESP…VCGCEFCWLC (315 aa)). Residues 54 to 71 (AEPPPPAAPPPPPPPAPA) show a composition bias toward pro residues. Over residues 72 to 99 (PVEAQAPPVEALPSEPAAEAEAEAVAAG) the composition is skewed to low complexity. Positions 100-109 (PEEDEAAEGG) are enriched in acidic residues. A TRIAD supradomain region spans residues 112–334 (EEVECPLCLV…LSPSGCTFWG (223 aa)). C116, C119, C139, C142, C203, C208, C225, C230, C235, C238, H243, C248, C284, and C287 together coordinate Zn(2+). The segment at 116–165 (CPLCLVRLPPERAPRLLSCPHRSCRDCLRHYLRLEISESRVPISCPECSE) adopts an RING-type 1 zinc-finger fold. The IBR-type zinc finger occupies 183–248 (HKYEEFMLRR…KQIWHPNQTC (66 aa)). The RING-type 2; atypical zinc-finger motif lies at 284-315 (CPRCSAYIIKMNDGSCNHMTCAVCGCEFCWLC). C299 is an active-site residue. C304, C307, C312, C315, H323, and C330 together coordinate Zn(2+). 2 helical membrane passes run 351–371 (LIGA…AMVI) and 412–432 (VIAA…VYGV). 2 disordered regions span residues 598–644 (QLVS…QSCE) and 660–732 (QPES…YEVE). The segment covering 674-683 (QSDDVPDITS) has biased composition (acidic residues).

The protein belongs to the RBR family. RNF19 subfamily. Interacts with UBE2L3, UBE2L6 and UCKL1. Expressed specifically in natural killer cells, activated macrophages and cytotoxic T-cells. Present in macrophages (at protein level). Ubiquitously expressed with high expression in testis.

Its subcellular location is the cytoplasmic granule membrane. It is found in the endoplasmic reticulum membrane. It carries out the reaction [E2 ubiquitin-conjugating enzyme]-S-ubiquitinyl-L-cysteine + [acceptor protein]-L-lysine = [E2 ubiquitin-conjugating enzyme]-L-cysteine + [acceptor protein]-N(6)-ubiquitinyl-L-lysine.. Its pathway is protein modification; protein ubiquitination. Its function is as follows. E3 ubiquitin-protein ligase which accepts ubiquitin from E2 ubiquitin-conjugating enzymes UBE2L3 and UBE2L6 in the form of a thioester and then directly transfers the ubiquitin to targeted substrates, such as UCKL1. Involved in the cytolytic activity of natural killer cells and cytotoxic T-cells. Protects against staurosporin-induced cell death. This chain is E3 ubiquitin-protein ligase RNF19B (Rnf19b), found in Mus musculus (Mouse).